A 331-amino-acid polypeptide reads, in one-letter code: Olfactory receptor 6K3 (331 aa).

Residues 1 to 41 (MCWTMPSPFTGSSTRNMESGNQSTVTEFIFTGFPQLQDGSL) lie on the Extracellular side of the membrane. An N-linked (GlcNAc...) asparagine glycan is attached at Asn-21. A helical membrane pass occupies residues 42-62 (LYFFPLLFIYTFIIIDNLLIF). Topologically, residues 63–70 (SAVRLDTH) are cytoplasmic. Residues 71-91 (LHNPMYNFISIFSFLEIWYTT) form a helical membrane-spanning segment. Residues 92-115 (ATIPKMLSNLISEKKAISMTGCIL) lie on the Extracellular side of the membrane. Cys-113 and Cys-205 are disulfide-bonded. The helical transmembrane segment at 116 to 136 (QMYFFHSLENSEGILLTTMAI) threads the bilayer. Over 137–155 (DRYVAICNPLRYQMIMTPR) the chain is Cytoplasmic. Residues 156 to 176 (LCAQLSAGSCLFGFLILLPEI) traverse the membrane as a helical segment. At 177–212 (VMISTLPFCGPNQIHQIFCDLVPVLSLACTDTSMIL) the chain is on the extracellular side. A helical membrane pass occupies residues 213–232 (IEDVIHAVTIIITFLIIALS). Residues 233–252 (YVRIVTVILRIPSSEGRQKA) are Cytoplasmic-facing. Residues 253–273 (FSTCAGHLMVFPIFFGSVSLM) traverse the membrane as a helical segment. Over 274 to 286 (YLRFSDTYPPVLD) the chain is Extracellular. Residues 287–307 (TAIALMFTVLAPFFNPIIYSL) traverse the membrane as a helical segment. The Cytoplasmic segment spans residues 308 to 331 (RNKDMNNAIKKLFCLQKVLNKPGG).

This sequence belongs to the G-protein coupled receptor 1 family.

It is found in the cell membrane. Functionally, odorant receptor. The chain is Olfactory receptor 6K3 (OR6K3) from Homo sapiens (Human).